The primary structure comprises 257 residues: MGRLQRTLSNISEEEIDNGRIGIVAGAIEYPNQPALVGRAALRTGSDHVRALVADPIYEIVAGQDPNLLVDRYAGEQFEESAVERTREMSEWADALVIGPGLVDADPQAVCEAIDTIDVPMVVDALALEPSLDADLSNAVLTPSGAEVGPIRDEYGSLEAFSEETGAVITLTGDVDEIVADGERLENETGTSAMTVAGTGDTMVGIVASLLGQGMDRREAAELGAWILGKTGELATANHGPGVVATDVIERIPDTIR.

A YjeF C-terminal domain is found at 1 to 257 (MGRLQRTLSN…VIERIPDTIR (257 aa)). Residue Gly-200 participates in AMP binding. Asp-201 contacts (6S)-NADPHX.

Belongs to the NnrD/CARKD family. In terms of assembly, homotetramer. The cofactor is Mg(2+).

The enzyme catalyses (6S)-NADHX + ADP = AMP + phosphate + NADH + H(+). The catalysed reaction is (6S)-NADPHX + ADP = AMP + phosphate + NADPH + H(+). In terms of biological role, catalyzes the dehydration of the S-form of NAD(P)HX at the expense of ADP, which is converted to AMP. Together with NAD(P)HX epimerase, which catalyzes the epimerization of the S- and R-forms, the enzyme allows the repair of both epimers of NAD(P)HX, a damaged form of NAD(P)H that is a result of enzymatic or heat-dependent hydration. The protein is ADP-dependent (S)-NAD(P)H-hydrate dehydratase of Haloterrigena turkmenica (strain ATCC 51198 / DSM 5511 / JCM 9101 / NCIMB 13204 / VKM B-1734 / 4k) (Halococcus turkmenicus).